The chain runs to 515 residues: Glycosyltransferase family 92 protein F59C6.8 (515 aa).

The helical transmembrane segment at 18–38 (LFIFIAVCLGFLIAVTILAGL) threads the bilayer. The GT92 domain maps to 163-456 (RKVVACFSPL…IEVCYNRIFY (294 aa)).

Belongs to the glycosyltransferase 92 family.

It is found in the membrane. This chain is Glycosyltransferase family 92 protein F59C6.8, found in Caenorhabditis elegans.